The sequence spans 334 residues: 6-phosphogluconolactonase (334 aa).

Belongs to the cycloisomerase 2 family.

The enzyme catalyses 6-phospho-D-glucono-1,5-lactone + H2O = 6-phospho-D-gluconate + H(+). The protein operates within carbohydrate degradation; pentose phosphate pathway; D-ribulose 5-phosphate from D-glucose 6-phosphate (oxidative stage): step 2/3. Its function is as follows. Catalyzes the hydrolysis of 6-phosphogluconolactone to 6-phosphogluconate. The sequence is that of 6-phosphogluconolactonase from Buchnera aphidicola subsp. Acyrthosiphon pisum (strain APS) (Acyrthosiphon pisum symbiotic bacterium).